We begin with the raw amino-acid sequence, 432 residues long: PC-esterase domain-containing protein 1B (432 aa).

2 disordered regions span residues 273-312 and 407-432; these read WESS…SPGL and GPYM…SRPQ. Residues 285–294 show a composition bias toward polar residues; it reads QDNIGPQFAQ. Residues 296–312 show a composition bias toward pro residues; it reads PPYPFPRPPPLLPSPGL.

The protein belongs to the PC-esterase family.

This is PC-esterase domain-containing protein 1B (Pced1b) from Rattus norvegicus (Rat).